Reading from the N-terminus, the 616-residue chain is Dihydroxy-acid dehydratase (616 aa).

Residue Asp81 participates in Mg(2+) binding. Cys122 contributes to the [2Fe-2S] cluster binding site. Mg(2+) contacts are provided by Asp123 and Lys124. The residue at position 124 (Lys124) is an N6-carboxylysine. Cys195 is a binding site for [2Fe-2S] cluster. Glu491 is a Mg(2+) binding site. The active-site Proton acceptor is Ser517.

It belongs to the IlvD/Edd family. As to quaternary structure, homodimer. [2Fe-2S] cluster is required as a cofactor. The cofactor is Mg(2+).

The catalysed reaction is (2R)-2,3-dihydroxy-3-methylbutanoate = 3-methyl-2-oxobutanoate + H2O. It catalyses the reaction (2R,3R)-2,3-dihydroxy-3-methylpentanoate = (S)-3-methyl-2-oxopentanoate + H2O. It participates in amino-acid biosynthesis; L-isoleucine biosynthesis; L-isoleucine from 2-oxobutanoate: step 3/4. It functions in the pathway amino-acid biosynthesis; L-valine biosynthesis; L-valine from pyruvate: step 3/4. Functions in the biosynthesis of branched-chain amino acids. Catalyzes the dehydration of (2R,3R)-2,3-dihydroxy-3-methylpentanoate (2,3-dihydroxy-3-methylvalerate) into 2-oxo-3-methylpentanoate (2-oxo-3-methylvalerate) and of (2R)-2,3-dihydroxy-3-methylbutanoate (2,3-dihydroxyisovalerate) into 2-oxo-3-methylbutanoate (2-oxoisovalerate), the penultimate precursor to L-isoleucine and L-valine, respectively. The polypeptide is Dihydroxy-acid dehydratase (Shigella flexneri).